The following is an 860-amino-acid chain: Alanine--tRNA ligase (860 aa).

Residues His-553, His-557, Cys-655, and His-659 each contribute to the Zn(2+) site.

This sequence belongs to the class-II aminoacyl-tRNA synthetase family. Zn(2+) is required as a cofactor.

The protein resides in the cytoplasm. It catalyses the reaction tRNA(Ala) + L-alanine + ATP = L-alanyl-tRNA(Ala) + AMP + diphosphate. Its function is as follows. Catalyzes the attachment of alanine to tRNA(Ala) in a two-step reaction: alanine is first activated by ATP to form Ala-AMP and then transferred to the acceptor end of tRNA(Ala). Also edits incorrectly charged Ser-tRNA(Ala) and Gly-tRNA(Ala) via its editing domain. This Legionella pneumophila (strain Paris) protein is Alanine--tRNA ligase.